The following is a 792-amino-acid chain: Xaa-Pro dipeptidyl-peptidase (792 aa).

Active-site charge relay system residues include Ser363, Asp482, and His513.

This sequence belongs to the peptidase S15 family. As to quaternary structure, homodimer.

Its subcellular location is the cytoplasm. The enzyme catalyses Hydrolyzes Xaa-Pro-|- bonds to release unblocked, N-terminal dipeptides from substrates including Ala-Pro-|-p-nitroanilide and (sequentially) Tyr-Pro-|-Phe-Pro-|-Gly-Pro-|-Ile.. Functionally, removes N-terminal dipeptides sequentially from polypeptides having unsubstituted N-termini provided that the penultimate residue is proline. The chain is Xaa-Pro dipeptidyl-peptidase from Lactobacillus delbrueckii subsp. bulgaricus (strain ATCC BAA-365 / Lb-18).